A 373-amino-acid polypeptide reads, in one-letter code: Probable pectin lyase C (373 aa).

The signal sequence occupies residues 1–17; that stretch reads MKKYLLSLLAAVTYTTA. Disulfide bonds link Cys78/Cys95 and Cys87/Cys215. N-linked (GlcNAc...) asparagine glycosylation is found at Asn140 and Asn229. Residue Arg245 is part of the active site. An intrachain disulfide couples Cys315 to Cys323.

Belongs to the polysaccharide lyase 1 family.

Its subcellular location is the secreted. The enzyme catalyses Eliminative cleavage of (1-&gt;4)-alpha-D-galacturonan methyl ester to give oligosaccharides with 4-deoxy-6-O-methyl-alpha-D-galact-4-enuronosyl groups at their non-reducing ends.. Its function is as follows. Pectinolytic enzymes consist of four classes of enzymes: pectin lyase, polygalacturonase, pectin methylesterase and rhamnogalacturonase. Among pectinolytic enzymes, pectin lyase is the most important in depolymerization of pectin, since it cleaves internal glycosidic bonds of highly methylated pectins. This chain is Probable pectin lyase C (pelC), found in Emericella nidulans (strain FGSC A4 / ATCC 38163 / CBS 112.46 / NRRL 194 / M139) (Aspergillus nidulans).